A 630-amino-acid polypeptide reads, in one-letter code: Golgi apyrase (630 aa).

Topologically, residues 1–500 (MLIENTNDRF…RKQSSSLSNK (500 aa)) are lumenal. The active-site Proton acceptor is the glutamate 152. Residues 501-517 (GFLMWFAIICCIFYLIF) traverse the membrane as a helical segment. The Cytoplasmic segment spans residues 518–630 (HRSHIIRRRF…SKFKDSRLYD (113 aa)). Residues 586-606 (SSATMQREHEPQRTASQSANL) are disordered.

This sequence belongs to the GDA1/CD39 NTPase family. As to quaternary structure, interacts with activator subunit VMA13 of vacuolar H(+)-ATPase. Interacts with CDC55; this interaction is disrupted by adenovirus E4orf4, which remains associated with both YND1 and CDC55. It depends on Ca(2+) as a cofactor. Requires Mg(2+) as cofactor. The cofactor is Mn(2+).

Its subcellular location is the golgi apparatus. The protein localises to the membrane. The catalysed reaction is a ribonucleoside 5'-triphosphate + 2 H2O = a ribonucleoside 5'-phosphate + 2 phosphate + 2 H(+). It participates in protein modification; protein glycosylation. With respect to regulation, activity is inhibited both by interaction with VMA13 and by V-ATPase acidification of the lumen. The activity of VMA13 is not required for YND1 inhibition. In terms of biological role, catalyzes the hydrolysis of phosphoanhydride bonds of nucleoside tri- and di-phosphates. Has equal high activity toward ADP/ATP, GDP/GTP, and UDP/UTP and approximately 50% less toward CDP/CTP and thiamine pyrophosphate. Has no activity toward GMP. Required for Golgi glycosylation and cell wall integrity. Together with CDC55, required for adenovirus E4orf4 (early region 4 open reading frame 4) induced toxicity, the apyrase activity is not required for this function. Plays a role in sphingolipid synthesis. The sequence is that of Golgi apyrase (YND1) from Saccharomyces cerevisiae (strain ATCC 204508 / S288c) (Baker's yeast).